The primary structure comprises 123 residues: Small ribosomal subunit protein uS12cz/uS12cy (123 aa).

This sequence belongs to the universal ribosomal protein uS12 family. In terms of assembly, part of the 30S ribosomal subunit.

The protein resides in the plastid. It localises to the chloroplast. With S4 and S5 plays an important role in translational accuracy. Located at the interface of the 30S and 50S subunits. The polypeptide is Small ribosomal subunit protein uS12cz/uS12cy (rps12-A) (Gossypium barbadense (Sea Island cotton)).